The primary structure comprises 1060 residues: DNA-directed RNA polymerase subunit beta (1060 aa).

Belongs to the RNA polymerase beta chain family. As to quaternary structure, in plastids the minimal PEP RNA polymerase catalytic core is composed of four subunits: alpha, beta, beta', and beta''. When a (nuclear-encoded) sigma factor is associated with the core the holoenzyme is formed, which can initiate transcription.

The protein resides in the plastid. The protein localises to the chloroplast. It catalyses the reaction RNA(n) + a ribonucleoside 5'-triphosphate = RNA(n+1) + diphosphate. In terms of biological role, DNA-dependent RNA polymerase catalyzes the transcription of DNA into RNA using the four ribonucleoside triphosphates as substrates. In Calycanthus floridus var. glaucus (Eastern sweetshrub), this protein is DNA-directed RNA polymerase subunit beta.